Reading from the N-terminus, the 442-residue chain is Myb family transcription factor PHL13 (442 aa).

The HTH myb-type domain maps to 235–295 (MTSKQRMRWT…HLQKYRTARY (61 aa)). A DNA-binding region (H-T-H motif) is located at residues 266–291 (PKAVLKLINSPGLTVYHVKSHLQKYR). The coiled coil stretch occupies residues 329–349 (TEALRLQMKVQKQLHEQLEIQ). Positions 342-347 (LHEQLE) match the LHEQLE motif. Over residues 370 to 380 (QQKMQENKKDS) the composition is skewed to basic and acidic residues. The interval 370–442 (QQKMQENKKD…TSNRKRVRED (73 aa)) is disordered. Residues 395–434 (SPNLSQPFLHKATNSEPSITQKLQNGSSTMDQSESTSGTS) show a composition bias toward polar residues.

This sequence belongs to the MYB-CC family.

The protein resides in the nucleus. The sequence is that of Myb family transcription factor PHL13 from Arabidopsis thaliana (Mouse-ear cress).